The chain runs to 510 residues: Glycerol kinase (510 aa).

Position 13 (T13) interacts with ADP. T13 and T14 together coordinate ATP. Position 13 (T13) interacts with sn-glycerol 3-phosphate. An ADP-binding site is contributed by R17. Sn-glycerol 3-phosphate contacts are provided by R83, E84, Y135, and D255. 5 residues coordinate glycerol: R83, E84, Y135, D255, and Q256. Positions 277, 321, 421, and 425 each coordinate ADP. The ATP site is built by T277, G321, and G421.

It belongs to the FGGY kinase family.

It catalyses the reaction glycerol + ATP = sn-glycerol 3-phosphate + ADP + H(+). It participates in polyol metabolism; glycerol degradation via glycerol kinase pathway; sn-glycerol 3-phosphate from glycerol: step 1/1. Functionally, key enzyme in the regulation of glycerol uptake and metabolism. Catalyzes the phosphorylation of glycerol to yield sn-glycerol 3-phosphate. The sequence is that of Glycerol kinase from Haloquadratum walsbyi (strain DSM 16790 / HBSQ001).